The following is an 838-amino-acid chain: Periplasmic nitrate reductase (838 aa).

Positions M1–A29 form a signal peptide, tat-type signal. In terms of domain architecture, 4Fe-4S Mo/W bis-MGD-type spans L41–D97. 4 residues coordinate [4Fe-4S] cluster: C48, C51, C55, and C83. Mo-bis(molybdopterin guanine dinucleotide)-binding positions include K85, Q152, N177, C181, W214–M221, S245–H249, M382, Q386, N492, S518–D519, K541, D568, and T728–S737. W804 is a substrate binding site. Mo-bis(molybdopterin guanine dinucleotide)-binding residues include N812 and K829.

This sequence belongs to the prokaryotic molybdopterin-containing oxidoreductase family. NasA/NapA/NarB subfamily. Component of the periplasmic nitrate reductase NapAB complex composed of NapA and NapB. The cofactor is [4Fe-4S] cluster. Requires Mo-bis(molybdopterin guanine dinucleotide) as cofactor. Post-translationally, predicted to be exported by the Tat system. The position of the signal peptide cleavage has not been experimentally proven.

Its subcellular location is the periplasm. It catalyses the reaction 2 Fe(II)-[cytochrome] + nitrate + 2 H(+) = 2 Fe(III)-[cytochrome] + nitrite + H2O. Catalytic subunit of the periplasmic nitrate reductase complex NapAB. Receives electrons from NapB and catalyzes the reduction of nitrate to nitrite. This is Periplasmic nitrate reductase from Ralstonia pickettii (strain 12J).